Here is a 559-residue protein sequence, read N- to C-terminus: Acetylcholinesterase-1 (559 aa).

The first 21 residues, 1-21 (MMLPRCFVTVLLMSSVLYIGG), serve as a signal peptide directing secretion. A disulfide bridge links Cys-92 with Cys-114. 142–143 (GG) is a binding site for substrate. Ser-223 serves as the catalytic Acyl-ester intermediate. Residue Ser-223 is modified to Phosphoserine. Cysteines 276 and 293 form a disulfide. N-linked (GlcNAc...) asparagine glycans are attached at residues Asn-278 and Asn-342. Catalysis depends on Glu-354, which acts as the Charge relay system. N-linked (GlcNAc...) asparagine glycosylation is present at Asn-374. Cys-432 and Cys-550 are disulfide-bonded. His-471 serves as the catalytic Charge relay system.

This sequence belongs to the type-B carboxylesterase/lipase family. In terms of tissue distribution, expressed by the venom gland.

It localises to the secreted. It catalyses the reaction acetylcholine + H2O = choline + acetate + H(+). In terms of biological role, terminates signal transduction at the neuromuscular junction by rapid hydrolysis of the acetylcholine released into the synaptic cleft. The chain is Acetylcholinesterase-1 from Trittame loki (Brush-footed trapdoor spider).